The primary structure comprises 297 residues: Lysenin (297 aa).

Residues 10–33 (EQIEVDVVAVWKEGYVYENRGSTS) form an N-terminal cap domain region. Residues 34–107 (VDQKITITKG…SKVIEHTITI (74 aa)) are beta-hairpin domain. An N-terminal cap domain region spans residues 108 to 156 (PPTSKFTRWQLNADVGGADIEYMYLIDEVTPIGGTQSIPQVITSRAKII). A C-terminal receptor-binding domain region spans residues 157–297 (VGRQIILGKT…EDKWILEVVG (141 aa)). An N-(acyl)-sphingosylphosphocholine contacts are provided by lysine 185, serine 227, tyrosine 233, and tyrosine 282. The cysteines at positions 272 and 283 are disulfide-linked.

The protein belongs to the lysenin family. As to quaternary structure, binds to sphingomyelin as a monomer by using its C-terminal domain. Forms a nonamer when sphingomyelin/lysenin ratio is lower than ca 500. Oligomerization, but not binding, is influenced by the fluidity of sphingomyelin. As to expression, expressed by coelomocytes.

Its subcellular location is the secreted. The protein localises to the target cell membrane. Its function is as follows. Pore-forming toxin that defensively acts against parasitic microorganisms by forming pores in sphingomyelin-containing membranes. Has hemolytic activity and is also cytotoxic to spermatozoa of some species of invertebrates and many species of vertebrates and to amphibian larvae, guinea pig polymorphonuclear leukocytes, chicken fibroblasts, normal spleen cells and various tumor cells. Is lethal for various species of reptiles, amphibian, birds and mammals. Induces smooth muscle contraction. It binds sphingomyelin and induces hemolysis in the same manner as lysenin-related protein 2, and is 10-fold more effective than lysenin-related protein 1. This Eisenia fetida (Red wiggler worm) protein is Lysenin.